The primary structure comprises 452 residues: Protein mab-21-like 4 (452 aa).

The protein is Protein mab-21-like 4 (Mab21l4) of Mus musculus (Mouse).